The primary structure comprises 123 residues: Small ribosomal subunit protein uS12 (123 aa).

Position 89 is a 3-methylthioaspartic acid (D89). The interval 100-123 is disordered; the sequence is GSLDTSGVSDRKQGRSKYGTKRPK. A compositionally biased stretch (basic residues) spans 113–123; the sequence is GRSKYGTKRPK.

Belongs to the universal ribosomal protein uS12 family. In terms of assembly, part of the 30S ribosomal subunit. Contacts proteins S8 and S17. May interact with IF1 in the 30S initiation complex.

In terms of biological role, with S4 and S5 plays an important role in translational accuracy. Interacts with and stabilizes bases of the 16S rRNA that are involved in tRNA selection in the A site and with the mRNA backbone. Located at the interface of the 30S and 50S subunits, it traverses the body of the 30S subunit contacting proteins on the other side and probably holding the rRNA structure together. The combined cluster of proteins S8, S12 and S17 appears to hold together the shoulder and platform of the 30S subunit. The protein is Small ribosomal subunit protein uS12 of Saccharophagus degradans (strain 2-40 / ATCC 43961 / DSM 17024).